The primary structure comprises 522 residues: GMP synthase [glutamine-hydrolyzing] (522 aa).

The region spanning 9–204 (KILILDFGAQ…VVDICGCQML (196 aa)) is the Glutamine amidotransferase type-1 domain. The Nucleophile role is filled by Cys86. Catalysis depends on residues His178 and Glu180. Residues 205-397 (WTAANIIEDQ…LGLPHAMVYR (193 aa)) enclose the GMPS ATP-PPase domain. Residue 232–238 (SGGVDSS) participates in ATP binding.

As to quaternary structure, homodimer.

It catalyses the reaction XMP + L-glutamine + ATP + H2O = GMP + L-glutamate + AMP + diphosphate + 2 H(+). It functions in the pathway purine metabolism; GMP biosynthesis; GMP from XMP (L-Gln route): step 1/1. Its function is as follows. Catalyzes the synthesis of GMP from XMP. This is GMP synthase [glutamine-hydrolyzing] (guaA) from Xylella fastidiosa (strain 9a5c).